Reading from the N-terminus, the 451-residue chain is MVPPIPPRPLRAHRSTPLSGRIRVPGDKSISHRALMLGGLAVGRTEIRGLLEGEDVIATAHAMEAMGARIDRQETADGAGVWTVDGVGVGGLAEPADVLDMGNAGTGARLLMGLLATHDLTAILTGDASLRGRPMKRVTDPLALFGASFVGRSGGRLPMAVRGTATPLPVSYRVPVPSAQVKSAVLLAGLNTPGETTVIEPVATRDHTERMLGHFGAALRLGRDDQGATTITLTGQPELRAAPVEVPADPSSAAFPLVAAVLVPESHVTLAGVGMNPQRIGLIDTLREMGADILIRDPRIEAGEPVADLEVRASALTGIEVPAARAPSMIDEYPILAVAAACARGTTRMHGLGELRVKESDRLSAVATGLAACGVDVTVDGDTLIVHGKGTVPKGGATVAVNLDHRIGMAFLVLGLVSAEAVTIDDGRAIDTSFPGFVTLMTGLGAPISLI.

3-phosphoshikimate contacts are provided by Lys-28, Ser-29, and Arg-33. Residue Lys-28 participates in phosphoenolpyruvate binding. Phosphoenolpyruvate contacts are provided by Gly-105 and Arg-133. The 3-phosphoshikimate site is built by Ser-178, Gln-180, Asp-331, and Lys-358. Gln-180 serves as a coordination point for phosphoenolpyruvate. The active-site Proton acceptor is Asp-331. Phosphoenolpyruvate-binding residues include Arg-362 and Arg-406.

The protein belongs to the EPSP synthase family. In terms of assembly, monomer.

The protein localises to the cytoplasm. It carries out the reaction 3-phosphoshikimate + phosphoenolpyruvate = 5-O-(1-carboxyvinyl)-3-phosphoshikimate + phosphate. The protein operates within metabolic intermediate biosynthesis; chorismate biosynthesis; chorismate from D-erythrose 4-phosphate and phosphoenolpyruvate: step 6/7. In terms of biological role, catalyzes the transfer of the enolpyruvyl moiety of phosphoenolpyruvate (PEP) to the 5-hydroxyl of shikimate-3-phosphate (S3P) to produce enolpyruvyl shikimate-3-phosphate and inorganic phosphate. The sequence is that of 3-phosphoshikimate 1-carboxyvinyltransferase from Rhodospirillum rubrum (strain ATCC 11170 / ATH 1.1.1 / DSM 467 / LMG 4362 / NCIMB 8255 / S1).